Here is a 200-residue protein sequence, read N- to C-terminus: Putative peroxiredoxin sll0755 (200 aa).

The 159-residue stretch at 5 to 163 folds into the Thioredoxin domain; that stretch reads LRVGQPAPDF…TLRVLKAIRH (159 aa). C50 (cysteine sulfenic acid (-SOH) intermediate) is an active-site residue.

Belongs to the peroxiredoxin family. AhpC/Prx1 subfamily. As to quaternary structure, homodimer; disulfide-linked, upon oxidation.

It localises to the cytoplasm. The enzyme catalyses a hydroperoxide + [thioredoxin]-dithiol = an alcohol + [thioredoxin]-disulfide + H2O. Thiol-specific peroxidase that catalyzes the reduction of hydrogen peroxide and organic hydroperoxides to water and alcohols, respectively. Plays a role in cell protection against oxidative stress by detoxifying peroxides. The polypeptide is Putative peroxiredoxin sll0755 (Synechocystis sp. (strain ATCC 27184 / PCC 6803 / Kazusa)).